Consider the following 284-residue polypeptide: Putative ABC transporter ATP-binding protein SCO5958 (284 aa).

Residues 15 to 250 (VALRGAAFAY…DLLRRAGLRL (236 aa)) enclose the ABC transporter domain. Residue 48-55 (GRNGSGKT) coordinates ATP.

It belongs to the ABC transporter superfamily.

The protein resides in the cell membrane. Functionally, probably part of an ABC transporter complex. Responsible for energy coupling to the transport system. The chain is Putative ABC transporter ATP-binding protein SCO5958 from Streptomyces coelicolor (strain ATCC BAA-471 / A3(2) / M145).